Consider the following 863-residue polypeptide: Axin-1 (863 aa).

Residues 1-81 are disordered; sequence MNVQEQGFPL…PEGSASPTPP (81 aa). The Tankyrase-binding motif signature appears at 20 to 29; the sequence is APRPPVPGEE. Positions 34-61 are enriched in polar residues; the sequence is STDSRPVNHSFCSGKGTSIKSETSTATP. At serine 75 the chain carries Phosphoserine. Serine 77 carries the post-translational modification Phosphoserine; by CK1. The RGS domain occupies 88-211; that stretch reads SLHSLLDDQD…LKSDIYLEYT (124 aa). The segment at 209–338 is interaction with TP53; sequence EYTRTGSESP…DADTLSLTDS (130 aa). Disordered stretches follow at residues 215–240, 249–268, and 315–344; these read SESP…YLPT, CDQD…SRLT, and ATSA…DGIP. Phosphoserine is present on serine 217. Acidic residues predominate over residues 249-258; it reads CDQDADEDDG. Over residues 325–339 the composition is skewed to low complexity; that stretch reads SLSSDADTLSLTDSS. The interval 348–432 is interaction with GSK3B; it reads IRKQHRREMQ…EDGEMPSGPM (85 aa). The tract at residues 353-411 is interaction with SIAH1; that stretch reads RREMQESIQVNGRVPLPHIPRTYRMPKEIRVEPQKFAEELIHRLEAVQRTREAEEKLEE. Residues 433 to 501 are interaction with beta-catenin; that stretch reads ASHKLPSVPA…SPDSGHVAKT (69 aa). Phosphoserine; by CK1 is present on serine 468. Threonine 480 bears the Phosphothreonine; by GSK3-beta mark. At serine 485 the chain carries Phosphoserine; by GSK3-beta. Residues serine 492 and serine 509 each carry the phosphoserine modification. The tract at residues 505–758 is interaction with RNF111; that stretch reads GGTASGHGKH…PVLSVVPAVS (254 aa). Positions 529-542 are enriched in basic residues; the sequence is HHRHVHHHVHHNSA. Disordered regions lie at residues 529-624 and 642-664; these read HHRH…DAEK and HRKA…SRPL. A compositionally biased stretch (basic and acidic residues) spans 543–554; that stretch reads RPKEQMEAEVAR. Residues 572 to 790 are interaction with PPP2CA; that stretch reads PRSYSENAGT…CDSIVVAYYF (219 aa). A compositionally biased stretch (polar residues) spans 575-584; the sequence is YSENAGTTLS. Positions 678-753 are interaction with HIPK2; sequence AQLRNSVQPS…RPACAPVLSV (76 aa). The DIX domain maps to 781–863; that stretch reads CDSIVVAYYF…KIIGKVEKVD (83 aa). Residues lysine 858 and lysine 861 each participate in a glycyl lysine isopeptide (Lys-Gly) (interchain with G-Cter in SUMO) cross-link.

As to quaternary structure, homodimer. Component of the beta-catenin destruction complex, containing at least CTNNB1, an axin and GSK3B, that regulates CTNNB1 protein levels through phosphorylation and ubiquitination. Interacts with GSK3B; the interaction hyperphosphorylates CTNNB1 leading to its ubiquitination and destruction. Interacts with DAXX; the interaction stimulates the interaction of DAXX with TP53, stimulates 'Ser-46' phosphorylation of TP53 and induces cell death on UV irradiation. Also interacts with APC, RNF111, SMAD6 and SMAD7. Interacts (via the C-terminal) with PPP1CA; the interaction dephosphorylates AXIN1 and regulates interaction with GSK3B. Interacts with PPP2CA; the interaction dephosphorylates AXIN1. Interacts with MDFI; the interaction decreases AXIN1-mediated JUN N-terminal kinase (JNK) activation. Interacts with MDFIC; the interaction inhibits beta-cateninin-mediated signaling and AXIN1-mediated JUN N-terminal kinase (JNK) activation. Binds ANKRD6, PIAS1, PIAS2, PIAS4, SUMO1, MAP3K1 and MAP3K4. Component of the AXIN1-HIPK2-TP53 complex. Interacts directly in the complex with TP53 and HIPK2. Interacts with DIXDC1; the interaction prevents interaction with MAP3K1. Interacts with AIDA; the interaction blocks the AXIN1-mediated JNK activation through disrupting AXIN1 homodimerization and Wnt signaling. Interacts with LRP5 (via its phosphorylated PPPSP motifs); the interaction is stimulated by WNT1 and GSK3B and activates beta-catenin signaling. Interacts with CTNNB1 (via the armadillo repeats 2-7). Interacts with MACF1. Found in a complex composed of MACF1, APC, AXIN1, CTNNB1 and GSK3B. Interacts with TNKS. Interacts with DAB2; the interaction is mutually exclusive with the AXIN1:PPP1CA interaction. Interacts with ZBED3 (via PPPSP motif); the interaction is direct, enhanced by protein kinase GSK3B and casein kinase CSNK1E activities and decreases GSK3B-induced beta-catenin serine and threonine phosphorylations. Interacts with WDR26. Interacts with GID8. Interacts with SIAH1 and SIAH2; both probably catalyze AXIN1 ubiquitination and subsequent proteasome-mediated ubiquitin-dependent degradation. Interaction with GSK3B and AXIN1 is competitive. Post-translationally, phosphorylation and dephosphorylation of AXIN1 regulates assembly and function of the beta-catenin complex. Phosphorylated by CK1 and GSK3B. Dephosphorylated by PPP1CA and PPP2CA. Phosphorylation by CK1 enhances binding of GSK3B to AXIN1. Also phosphorylated by CDK2 which regulates interaction with CTNBB1. In terms of processing, ADP-ribosylated by tankyrase TNKS and TNKS2. Poly-ADP-ribosylated protein is recognized by RNF146, followed by ubiquitination and subsequent activation of the Wnt signaling pathway. Ubiquitinated by RNF146 when poly-ADP-ribosylated, leading to its degradation and subsequent activation of the Wnt signaling pathway. Deubiquitinated by USP34, deubiquitinated downstream of beta-catenin stabilization step: deubiquitination is important for nuclear accumulation during Wnt signaling to positively regulate beta-catenin (CTNBB1)-mediated transcription. Sumoylation at Lys-858 and Lys-861 prevents ubiquitination and degradation. Sumoylation is required for AXIN1-mediated JNK activation. Ubiquitination by SIAH1 and SIAH2 induces its proteasomal degradation as part of the activation of the Wnt signaling pathway. Expressed in embryonic stem cells.

The protein localises to the cytoplasm. The protein resides in the nucleus. It localises to the cell membrane. It is found in the membrane. Component of the beta-catenin destruction complex required for regulating CTNNB1 levels through phosphorylation and ubiquitination, and modulating Wnt-signaling. Controls dorsoventral patterning via two opposing effects; down-regulates CTNNB1 to inhibit the Wnt signaling pathway and ventralize embryos, but also dorsalizes embryos by activating a Wnt-independent JNK signaling pathway. In Wnt signaling, probably facilitates the phosphorylation of CTNNB1 and APC by GSK3B. Likely to function as a tumor suppressor. Facilitates the phosphorylation of TP53 by HIPK2 upon ultraviolet irradiation. Enhances TGF-beta signaling by recruiting the RNF111 E3 ubiquitin ligase and promoting the degradation of inhibitory SMAD7. Also a component of the AXIN1-HIPK2-TP53 complex which controls cell growth, apoptosis and development. In Mus musculus (Mouse), this protein is Axin-1 (Axin1).